Reading from the N-terminus, the 951-residue chain is Replication protein A 70 kDa DNA-binding subunit C (951 aa).

The segment at 139-172 (AQTNNGTYSGGASMLGPSVAPRAEQAASNSSYGG) is disordered. A DNA-binding region (OB) is located at residues 320 to 403 (WTIKARVTAK…NTLNHDYEIT (84 aa)). The C4-type zinc-finger motif lies at 612–639 (CPKLLPVGRQCNKKAINNGDGMWHCDRC).

Belongs to the replication factor A protein 1 family. As to quaternary structure, heterotrimer of RPA1, RPA2 and RPA3 (canonical replication protein A complex). Interacts with RPA2C.

It is found in the nucleus. Its function is as follows. Component of the replication protein A complex (RPA) required for DNA recombination, repair and replication. The activity of RPA is mediated by single-stranded DNA binding and protein interactions. Probably involved in repair of double-strand DNA breaks (DSBs) induced by genotoxic stresses. The polypeptide is Replication protein A 70 kDa DNA-binding subunit C (RPA1C) (Oryza sativa subsp. japonica (Rice)).